Reading from the N-terminus, the 473-residue chain is 3-isopropylmalate dehydratase large subunit (473 aa).

[4Fe-4S] cluster-binding residues include Cys-349, Cys-409, and Cys-412.

Belongs to the aconitase/IPM isomerase family. LeuC type 1 subfamily. As to quaternary structure, heterodimer of LeuC and LeuD. [4Fe-4S] cluster is required as a cofactor.

The catalysed reaction is (2R,3S)-3-isopropylmalate = (2S)-2-isopropylmalate. Its pathway is amino-acid biosynthesis; L-leucine biosynthesis; L-leucine from 3-methyl-2-oxobutanoate: step 2/4. In terms of biological role, catalyzes the isomerization between 2-isopropylmalate and 3-isopropylmalate, via the formation of 2-isopropylmaleate. The polypeptide is 3-isopropylmalate dehydratase large subunit (Gloeobacter violaceus (strain ATCC 29082 / PCC 7421)).